A 442-amino-acid polypeptide reads, in one-letter code: D-serine dehydratase (442 aa).

An N6-(pyridoxal phosphate)lysine modification is found at Lys118.

It belongs to the serine/threonine dehydratase family. DsdA subfamily. Monomer. Requires pyridoxal 5'-phosphate as cofactor.

It catalyses the reaction D-serine = pyruvate + NH4(+). The polypeptide is D-serine dehydratase (Escherichia coli O6:H1 (strain CFT073 / ATCC 700928 / UPEC)).